Consider the following 265-residue polypeptide: 3-methyl-2-oxobutanoate hydroxymethyltransferase (265 aa).

Residues aspartate 41 and aspartate 80 each coordinate Mg(2+). 3-methyl-2-oxobutanoate contacts are provided by residues 41–42, aspartate 80, and lysine 109; that span reads DS. Glutamate 111 serves as a coordination point for Mg(2+). The active-site Proton acceptor is the glutamate 178.

Belongs to the PanB family. As to quaternary structure, homodecamer; pentamer of dimers. Mg(2+) is required as a cofactor.

It localises to the cytoplasm. The catalysed reaction is 3-methyl-2-oxobutanoate + (6R)-5,10-methylene-5,6,7,8-tetrahydrofolate + H2O = 2-dehydropantoate + (6S)-5,6,7,8-tetrahydrofolate. It participates in cofactor biosynthesis; (R)-pantothenate biosynthesis; (R)-pantoate from 3-methyl-2-oxobutanoate: step 1/2. Catalyzes the reversible reaction in which hydroxymethyl group from 5,10-methylenetetrahydrofolate is transferred onto alpha-ketoisovalerate to form ketopantoate. The chain is 3-methyl-2-oxobutanoate hydroxymethyltransferase from Thermosipho africanus (strain TCF52B).